Consider the following 101-residue polypeptide: Protein Tat (101 aa).

A compositionally biased stretch (basic and acidic residues) spans 1–12 (MDPVDPRLEPWK). The segment at 1 to 20 (MDPVDPRLEPWKHPGSQPKA) is disordered. Residues 1-24 (MDPVDPRLEPWKHPGSQPKAACTS) form an interaction with human CREBBP region. Positions 1–48 (MDPVDPRLEPWKHPGSQPKAACTSCYCKKCCFHCQVCFTTKGLGISYG) are transactivation. Cys-22, Cys-25, and Cys-27 together coordinate Zn(2+). The interval 22 to 37 (CTSCYCKKCCFHCQVC) is cysteine-rich. Residue Lys-28 is modified to N6-acetyllysine; by host PCAF. 4 residues coordinate Zn(2+): Cys-30, His-33, Cys-34, and Cys-37. Residues 38-48 (FTTKGLGISYG) form a core region. Over residues 48-57 (GRKKRRQRRR) the composition is skewed to basic residues. The disordered stretch occupies residues 48–101 (GRKKRRQRRRAPQDSQTHQVSLPKQPASQARGDPTGPKESKKKVERETETDPVD). The short motif at 49–57 (RKKRRQRRR) is the Nuclear localization signal, RNA-binding (TAR), and protein transduction element. The interaction with the host capping enzyme RNGTT stretch occupies residues 49-86 (RKKRRQRRRAPQDSQTHQVSLPKQPASQARGDPTGPKE). N6-acetyllysine; by host EP300 and GCN5L2 is present on residues Lys-50 and Lys-51. Asymmetric dimethylarginine; by host PRMT6 occurs at positions 52 and 53. Positions 60-75 (QDSQTHQVSLPKQPAS) are enriched in polar residues. Residue Lys-71 forms a Glycyl lysine isopeptide (Lys-Gly) (interchain with G-Cter in ubiquitin) linkage. The Cell attachment site motif lies at 78–80 (RGD). Basic and acidic residues predominate over residues 83–101 (GPKESKKKVERETETDPVD).

It belongs to the lentiviruses Tat family. In terms of assembly, interacts with host CCNT1. Associates with the P-TEFb complex composed at least of Tat, P-TEFb (CDK9 and CCNT1), TAR RNA, RNA Pol II. Recruits the HATs CREBBP, TAF1/TFIID, EP300, PCAF and GCN5L2. Interacts with host KAT5/Tip60; this interaction targets the latter to degradation. Interacts with the host deacetylase SIRT1. Interacts with host capping enzyme RNGTT; this interaction stimulates RNGTT. Binds to host KDR, and to the host integrins ITGAV/ITGB3 and ITGA5/ITGB1. Interacts with host KPNB1/importin beta-1 without previous binding to KPNA1/importin alpha-1. Interacts with EIF2AK2. Interacts with host nucleosome assembly protein NAP1L1; this interaction may be required for the transport of Tat within the nucleus, since the two proteins interact at the nuclear rim. Interacts with host C1QBP/SF2P32; this interaction involves lysine-acetylated Tat. Interacts with the host chemokine receptors CCR2, CCR3 and CXCR4. Interacts with host DPP4/CD26; this interaction may trigger an anti-proliferative effect. Interacts with host LDLR. Interacts with the host extracellular matrix metalloproteinase MMP1. Interacts with host PRMT6; this interaction mediates Tat's methylation. Interacts with, and is ubiquitinated by MDM2/Hdm2. Interacts with host PSMC3 and HTATIP2. Interacts with STAB1; this interaction may overcome SATB1-mediated repression of IL2 and IL2RA (interleukin) in T cells by binding to the same domain than HDAC1. Interacts (when acetylated) with human CDK13, thereby increasing HIV-1 mRNA splicing and promoting the production of the doubly spliced HIV-1 protein Nef. Interacts with host TBP; this interaction modulates the activity of transcriptional pre-initiation complex. Interacts with host RELA. Interacts with host PLSCR1; this interaction negatively regulates Tat transactivation activity by altering its subcellular distribution. Asymmetrical arginine methylation by host PRMT6 seems to diminish the transactivation capacity of Tat and affects the interaction with host CCNT1. In terms of processing, acetylation by EP300, CREBBP, GCN5L2/GCN5 and PCAF regulates the transactivation activity of Tat. EP300-mediated acetylation of Lys-50 promotes dissociation of Tat from the TAR RNA through the competitive binding to PCAF's bromodomain. In addition, the non-acetylated Tat's N-terminus can also interact with PCAF. PCAF-mediated acetylation of Lys-28 enhances Tat's binding to CCNT1. Lys-50 is deacetylated by SIRT1. Post-translationally, polyubiquitination by host MDM2 does not target Tat to degradation, but activates its transactivation function and fosters interaction with CCNT1 and TAR RNA. Phosphorylated by EIF2AK2 on serine and threonine residues adjacent to the basic region important for TAR RNA binding and function. Phosphorylation of Tat by EIF2AK2 is dependent on the prior activation of EIF2AK2 by dsRNA.

The protein localises to the host nucleus. The protein resides in the host nucleolus. It localises to the host cytoplasm. It is found in the secreted. In terms of biological role, transcriptional activator that increases RNA Pol II processivity, thereby increasing the level of full-length viral transcripts. Recognizes a hairpin structure at the 5'-LTR of the nascent viral mRNAs referred to as the transactivation responsive RNA element (TAR) and recruits the cyclin T1-CDK9 complex (P-TEFb complex) that will in turn hyperphosphorylate the RNA polymerase II to allow efficient elongation. The CDK9 component of P-TEFb and other Tat-activated kinases hyperphosphorylate the C-terminus of RNA Pol II that becomes stabilized and much more processive. Other factors such as HTATSF1/Tat-SF1, SUPT5H/SPT5, and HTATIP2 are also important for Tat's function. Besides its effect on RNA Pol II processivity, Tat induces chromatin remodeling of proviral genes by recruiting the histone acetyltransferases (HATs) CREBBP, EP300 and PCAF to the chromatin. This also contributes to the increase in proviral transcription rate, especially when the provirus integrates in transcriptionally silent region of the host genome. To ensure maximal activation of the LTR, Tat mediates nuclear translocation of NF-kappa-B by interacting with host RELA. Through its interaction with host TBP, Tat may also modulate transcription initiation. Tat can reactivate a latently infected cell by penetrating in it and transactivating its LTR promoter. In the cytoplasm, Tat is thought to act as a translational activator of HIV-1 mRNAs. Functionally, extracellular circulating Tat can be endocytosed by surrounding uninfected cells via the binding to several surface receptors such as CD26, CXCR4, heparan sulfate proteoglycans (HSPG) or LDLR. Neurons are rarely infected, but they internalize Tat via their LDLR. Through its interaction with nuclear HATs, Tat is potentially able to control the acetylation-dependent cellular gene expression. Modulates the expression of many cellular genes involved in cell survival, proliferation or in coding for cytokines or cytokine receptors. Tat plays a role in T-cell and neurons apoptosis. Tat induced neurotoxicity and apoptosis probably contribute to neuroAIDS. Circulating Tat also acts as a chemokine-like and/or growth factor-like molecule that binds to specific receptors on the surface of the cells, affecting many cellular pathways. In the vascular system, Tat binds to ITGAV/ITGB3 and ITGA5/ITGB1 integrins dimers at the surface of endothelial cells and competes with bFGF for heparin-binding sites, leading to an excess of soluble bFGF. This chain is Protein Tat, found in Homo sapiens (Human).